A 366-amino-acid polypeptide reads, in one-letter code: Aliphatic nitrilase (366 aa).

Residues 8–282 enclose the CN hydrolase domain; it reads FKVAAVQAQP…EGILYADIDL (275 aa). Catalysis depends on E48, which acts as the Proton acceptor. K131 functions as the Proton donor in the catalytic mechanism. The Nucleophile role is filled by C165. A disordered region spans residues 346–366; that stretch reads DEQRALPSTHSDETDRATASI. Residues 355–366 show a composition bias toward basic and acidic residues; that stretch reads HSDETDRATASI.

The protein belongs to the carbon-nitrogen hydrolase superfamily. Nitrilase family. In terms of assembly, homodimer.

The enzyme catalyses an aliphatic nitrile + 2 H2O = a carboxylate + NH4(+). This Rhodococcus rhodochrous protein is Aliphatic nitrilase (nitA).